A 397-amino-acid polypeptide reads, in one-letter code: Protein ROH1D (397 aa).

The chain crosses the membrane as a helical span at residues 247-267; sequence LIVPVYTMTTVLLFVMWALVA.

Belongs to the ROH1 family. In terms of assembly, interacts with EXO70C2. As to expression, mostly expressed in mature pollen.

The protein localises to the membrane. The protein resides in the cytoplasm. It localises to the cytosol. Functionally, involved in the regulation of plant growth, and modulates pollen development to ensure male fertility. May also affect the composition of the inner seed coat mucilage layer. The sequence is that of Protein ROH1D from Arabidopsis thaliana (Mouse-ear cress).